Here is a 1170-residue protein sequence, read N- to C-terminus: Thrombospondin-2 (1170 aa).

Positions 1–18 (MLWPLLLLALWAWPSAQA) are cleaved as a signal peptide. The 197-residue stretch at 19–215 (GDQDEDTAFD…LQNVYLVFEN (197 aa)) folds into the Laminin G-like domain. The tract at residues 19-232 (GDQDEDTAFD…KKGCQQSQGA (214 aa)) is heparin-binding. Asparagine 151, asparagine 316, and asparagine 330 each carry an N-linked (GlcNAc...) asparagine glycan. The region spanning 318–375 (SACWQDGRFFAENETWVVDSCTKCTCKKFKTVCHQISCPPATCADPWFVEGECCPSCV) is the VWFC domain. 3 consecutive TSP type-1 domains span residues 379–429 (EEGW…GRCD), 435–490 (DGGW…PPCP), and 492–547 (DGRW…KSCP). Disulfide bonds link cysteine 391–cysteine 423, cysteine 395–cysteine 428, cysteine 406–cysteine 413, cysteine 447–cysteine 484, cysteine 451–cysteine 489, cysteine 462–cysteine 474, cysteine 504–cysteine 541, cysteine 508–cysteine 546, cysteine 519–cysteine 531, cysteine 551–cysteine 562, cysteine 556–cysteine 572, cysteine 575–cysteine 586, cysteine 592–cysteine 608, cysteine 599–cysteine 617, cysteine 620–cysteine 644, cysteine 650–cysteine 663, cysteine 657–cysteine 676, cysteine 678–cysteine 689, cysteine 705–cysteine 713, cysteine 718–cysteine 738, cysteine 754–cysteine 774, cysteine 777–cysteine 797, cysteine 813–cysteine 833, cysteine 836–cysteine 856, cysteine 874–cysteine 894, and cysteine 910–cysteine 930. Asparagine 455 carries N-linked (GlcNAc...) asparagine glycosylation. One can recognise an EGF-like 1 domain in the interval 547 to 587 (PIDGCLSNPCFPGAECSSFPDGSWSCGSCPGGFLGNGTHCE). N-linked (GlcNAc...) asparagine glycosylation occurs at asparagine 582. Residues 646 to 690 (PENPCKDKTHSCHRHAECIYLGHFSDPMYKCECQTGYAGDGLICG) form the EGF-like 2 domain. TSP type-3 repeat units lie at residues 691–726 (EDSDLDGWPNKNLVCATNATYHCVKDNCPLLPNSGQ), 727–762 (EDFDKDGIGDACDDDDDNDGVSDEKDNCQLLFNPRQ), 763–785 (FDYDKDEVGDRCDNCPYVHNPAQ), 786–821 (IDTDNNGEGDACSVDIDGDDVFNERDNCPYVYNTDQ), 822–844 (RDTDGDGVGDHCDNCPLVHNPDQ), 845–882 (TDVDNDLVGDQCDNNEDIDEDGHQNNQDNCPHIPNANQ), 883–918 (ADHDRDGQGDACDSDDDNDGIPDDRDNCRLVANPDQ), and 919–954 (EDSDGDRRGDACKDDFDNDSIPDIDDVCPENNAISE). N-linked (GlcNAc...) asparagine glycosylation occurs at asparagine 708. Positions 731–750 (KDGIGDACDDDDDNDGVSDE) are disordered. A compositionally biased stretch (acidic residues) spans 737–747 (ACDDDDDNDGV). The disordered stretch occupies residues 841 to 944 (NPDQTDVDND…DNDSIPDIDD (104 aa)). 2 stretches are compositionally biased toward acidic residues: residues 845 to 864 (TDVDNDLVGDQCDNNEDIDE) and 894 to 903 (CDSDDDNDGI). A compositionally biased stretch (basic and acidic residues) spans 923–933 (GDRRGDACKDD). The Cell attachment site signature appears at 926-928 (RGD). The segment covering 934–944 (FDNDSIPDIDD) has biased composition (acidic residues). N-linked (GlcNAc...) asparagine glycans are attached at residues asparagine 936 and asparagine 1067. A disulfide bridge connects residues cysteine 946 and cysteine 1167. A TSP C-terminal domain is found at 958-1170 (RNFQMVHLDP…SDLKYECRDV (213 aa)).

The protein belongs to the thrombospondin family. As to quaternary structure, homotrimer; disulfide-linked. Can bind to fibrinogen, fibronectin, laminin and type V collagen. Interacts (via the TSP type I repeats) with CD36; the interaction conveys an antiangiogenic effect. Interacts (via the TSP type I repeats) with HRG; the interaction blocks the antiangiogenic effect of THBS2 with CD36.

Adhesive glycoprotein that mediates cell-to-cell and cell-to-matrix interactions. Ligand for CD36 mediating antiangiogenic properties. The chain is Thrombospondin-2 (THBS2) from Bos taurus (Bovine).